A 344-amino-acid chain; its full sequence is UDP-galactose/UDP-glucose transporter 5B (344 aa).

8 helical membrane-spanning segments follow: residues 16 to 36 (LWKG…YGVL), 56 to 76 (LFLV…ALLA), 115 to 135 (VQTL…TLIM), 142 to 162 (FDYL…LFPA), 176 to 196 (TVWG…TSTF), 220 to 240 (CVLS…VDFV), 246 to 266 (CLLD…FISY), and 292 to 312 (CIWF…IVFG). The disordered stretch occupies residues 324 to 344 (KNSQTQPPPPELPQYEKVESS).

It belongs to the nucleotide-sugar transporter family. UDP-galactose:UMP antiporter (TC 2.A.7.11) subfamily.

The protein localises to the membrane. Sugar transporter involved in the transport of nucleotide-sugars from cytoplasm into the Golgi and/or the endoplasmic reticulum. This chain is UDP-galactose/UDP-glucose transporter 5B, found in Arabidopsis thaliana (Mouse-ear cress).